Reading from the N-terminus, the 647-residue chain is Glutamyl-tRNA(Gln) amidotransferase subunit B, mitochondrial (647 aa).

A mitochondrion-targeting transit peptide spans methionine 1 to leucine 16. Residues proline 39–arginine 77 form a disordered region. The segment covering asparagine 58–serine 76 has biased composition (low complexity).

This sequence belongs to the GatB/GatE family. GatB subfamily. Subunit of the heterotrimeric GatCAB amidotransferase (AdT) complex, composed of A, B and C subunits.

It is found in the mitochondrion. The catalysed reaction is L-glutamyl-tRNA(Gln) + L-glutamine + ATP + H2O = L-glutaminyl-tRNA(Gln) + L-glutamate + ADP + phosphate + H(+). In terms of biological role, allows the formation of correctly charged Gln-tRNA(Gln) through the transamidation of misacylated Glu-tRNA(Gln) in the mitochondria. The reaction takes place in the presence of glutamine and ATP through an activated gamma-phospho-Glu-tRNA(Gln). The polypeptide is Glutamyl-tRNA(Gln) amidotransferase subunit B, mitochondrial (Mycosarcoma maydis (Corn smut fungus)).